We begin with the raw amino-acid sequence, 534 residues long: Zinc finger protein 671 (534 aa).

The KRAB domain maps to 49–120 (VVFEDVFVYF…DQVDMTSATE (72 aa)). Residues 192–214 (YLCGACGKQFWFSTDFDQHQNQP) form a C2H2-type 1; degenerate zinc finger. C2H2-type zinc fingers lie at residues 285-307 (HRCGECGKAFTRKDTLARHQRIH), 313-335 (YECNECGKFFSQSYDLFKHQTVH), 341-363 (YECSECGKFFRQISGLIEHRRVH), 369-391 (YQCGKCGKFFSSKSNLIRHQEVH), 397-419 (YVCSECGKEFSRKHTLVLHQRTH), 425-447 (YECSECGKAFSQSSHLNVHWRIH), 451-473 (YECSRCGKAFSCISKLIQHQKVH), 479-501 (YECSKCGKAFTQRPNLIRHWKVH), and 507-529 (YVCSECGREFIRKQTLVLHQRVH).

It belongs to the krueppel C2H2-type zinc-finger protein family.

The protein localises to the nucleus. May be involved in transcriptional regulation. This is Zinc finger protein 671 (ZNF671) from Homo sapiens (Human).